The sequence spans 356 residues: Probable arabinogalactan endo-beta-1,4-galactanase A (356 aa).

The N-terminal stretch at 1 to 21 (MLGKTVLLPLLVLLCHSLASA) is a signal peptide. N-linked (GlcNAc...) asparagine glycosylation is present at asparagine 133. Catalysis depends on glutamate 157, which acts as the Proton donor. Glutamate 268 acts as the Nucleophile in catalysis.

It belongs to the glycosyl hydrolase 53 family.

It localises to the secreted. It carries out the reaction The enzyme specifically hydrolyzes (1-&gt;4)-beta-D-galactosidic linkages in type I arabinogalactans.. Endogalactanase involved in the degradation of plant cell wall polysaccharides, and more particularly of hairy regions of pectin. The protein is Probable arabinogalactan endo-beta-1,4-galactanase A (galA) of Aspergillus fumigatus (strain CBS 144.89 / FGSC A1163 / CEA10) (Neosartorya fumigata).